The chain runs to 445 residues: UPF0210 protein llmg_1581 (445 aa).

This sequence belongs to the UPF0210 family. As to quaternary structure, homodimer.

The polypeptide is UPF0210 protein llmg_1581 (Lactococcus lactis subsp. cremoris (strain MG1363)).